The chain runs to 248 residues: 2,3-bisphosphoglycerate-dependent phosphoglycerate mutase (248 aa).

Residues 8 to 15, 21 to 22, R60, 87 to 90, K98, 114 to 115, and 183 to 184 each bind substrate; these read RHGESTWN, TG, ERHY, RR, and GN. H9 serves as the catalytic Tele-phosphohistidine intermediate. E87 (proton donor/acceptor) is an active-site residue.

This sequence belongs to the phosphoglycerate mutase family. BPG-dependent PGAM subfamily. Homodimer.

The enzyme catalyses (2R)-2-phosphoglycerate = (2R)-3-phosphoglycerate. The protein operates within carbohydrate degradation; glycolysis; pyruvate from D-glyceraldehyde 3-phosphate: step 3/5. Its function is as follows. Catalyzes the interconversion of 2-phosphoglycerate and 3-phosphoglycerate. The protein is 2,3-bisphosphoglycerate-dependent phosphoglycerate mutase of Burkholderia cenocepacia (strain ATCC BAA-245 / DSM 16553 / LMG 16656 / NCTC 13227 / J2315 / CF5610) (Burkholderia cepacia (strain J2315)).